The primary structure comprises 188 residues: MEKQTAIPLRERNIILIGFMGAGKTTIGQLVAKKLYRDFIDVDAEIERRQGMSIPEIFAQKGEAYFRKVERELIVDLCTNTRLKILSLGGGAYLQEEVRRACLAHGIVFFLDLSWDYWKEERLPLIVDSRPVLKNKTLEEVEQLFFQRQSAYALHHSRVVINELEAEQAADQIVESIKWMWDVYEPNR.

21–26 (GAGKTT) is a binding site for ATP. Thr-25 contacts Mg(2+). Residues Asp-43, Arg-67, and Gly-90 each coordinate substrate. Arg-130 lines the ATP pocket. Arg-148 lines the substrate pocket.

The protein belongs to the shikimate kinase family. Monomer. It depends on Mg(2+) as a cofactor.

It is found in the cytoplasm. The catalysed reaction is shikimate + ATP = 3-phosphoshikimate + ADP + H(+). Its pathway is metabolic intermediate biosynthesis; chorismate biosynthesis; chorismate from D-erythrose 4-phosphate and phosphoenolpyruvate: step 5/7. Its function is as follows. Catalyzes the specific phosphorylation of the 3-hydroxyl group of shikimic acid using ATP as a cosubstrate. The sequence is that of Shikimate kinase from Geobacillus thermodenitrificans (strain NG80-2).